The following is a 124-amino-acid chain: MKVLILVLLAVVILQAAPIRKLEDLLPTRYPPDHELVYWCTYANQCDFCWECVHGICRNRIQADWPVIHQNDWIINCTVSRWNGICSYYEGPRNHTDHQMDCANPTSHTYPHREYMKIYERDDL.

The first 16 residues, 1–16 (MKVLILVLLAVVILQA), serve as a signal peptide directing secretion. 2 N-linked (GlcNAc...) asparagine; by host glycosylation sites follow: Asn76 and Asn94.

Belongs to the asfivirus MGF 110 family.

In terms of biological role, plays a role in virus cell tropism, and may be required for efficient virus replication in macrophages. This is Protein MGF 110-8L from Ornithodoros (relapsing fever ticks).